Here is a 56-residue protein sequence, read N- to C-terminus: Bdellin B-3 (56 aa).

Residues 1–42 (DTECVCTKELHRVCGSDGVTYDNECLATCHGASVAHDHACEG) form the Kazal-like domain. Cystine bridges form between cysteine 4–cysteine 29, cysteine 6–cysteine 25, and cysteine 14–cysteine 40.

Functionally, proteinase inhibitor. Blocks the activity of trypsin, plasmin and sperm acrosin. The protein is Bdellin B-3 of Hirudo medicinalis (Medicinal leech).